The chain runs to 503 residues: Aspartyl/glutamyl-tRNA(Asn/Gln) amidotransferase subunit B (503 aa).

It belongs to the GatB/GatE family. GatB subfamily. Heterotrimer of A, B and C subunits.

The enzyme catalyses L-glutamyl-tRNA(Gln) + L-glutamine + ATP + H2O = L-glutaminyl-tRNA(Gln) + L-glutamate + ADP + phosphate + H(+). It catalyses the reaction L-aspartyl-tRNA(Asn) + L-glutamine + ATP + H2O = L-asparaginyl-tRNA(Asn) + L-glutamate + ADP + phosphate + 2 H(+). In terms of biological role, allows the formation of correctly charged Asn-tRNA(Asn) or Gln-tRNA(Gln) through the transamidation of misacylated Asp-tRNA(Asn) or Glu-tRNA(Gln) in organisms which lack either or both of asparaginyl-tRNA or glutaminyl-tRNA synthetases. The reaction takes place in the presence of glutamine and ATP through an activated phospho-Asp-tRNA(Asn) or phospho-Glu-tRNA(Gln). The protein is Aspartyl/glutamyl-tRNA(Asn/Gln) amidotransferase subunit B of Nocardia farcinica (strain IFM 10152).